We begin with the raw amino-acid sequence, 127 residues long: Modulator protein MzrA (127 aa).

Over 1–10 the chain is Cytoplasmic; the sequence is MQIPRMSLRQ. The helical transmembrane segment at 11–31 threads the bilayer; sequence LAWSGAVLLLVGTLLLAWSAV. The Periplasmic portion of the chain corresponds to 32-127; sequence RQQESTLAIR…RLRDNSHRFG (96 aa).

Belongs to the MzrA family. Interacts with EnvZ.

It localises to the cell inner membrane. Modulates the activity of the EnvZ/OmpR two-component regulatory system, probably by directly modulating EnvZ enzymatic activity and increasing stability of phosphorylated OmpR. Links the two-component systems CpxA/CpxR and EnvZ/OmpR. The protein is Modulator protein MzrA of Escherichia coli (strain K12).